The chain runs to 421 residues: Probable sugar-binding periplasmic protein (421 aa).

A signal peptide spans 1–27 (MHKLLKLAAMGTAACALLAGMAPVANA).

It belongs to the bacterial solute-binding protein 1 family.

The protein localises to the periplasm. Its function is as follows. Part of a binding-protein-dependent transport system for a sugar. The chain is Probable sugar-binding periplasmic protein from Brucella melitensis biotype 1 (strain ATCC 23456 / CCUG 17765 / NCTC 10094 / 16M).